The chain runs to 274 residues: Putative pyruvate, phosphate dikinase regulatory protein (274 aa).

150–157 (GPSRTSKT) provides a ligand contact to ADP.

Belongs to the pyruvate, phosphate/water dikinase regulatory protein family. PDRP subfamily.

The enzyme catalyses N(tele)-phospho-L-histidyl/L-threonyl-[pyruvate, phosphate dikinase] + ADP = N(tele)-phospho-L-histidyl/O-phospho-L-threonyl-[pyruvate, phosphate dikinase] + AMP + H(+). The catalysed reaction is N(tele)-phospho-L-histidyl/O-phospho-L-threonyl-[pyruvate, phosphate dikinase] + phosphate + H(+) = N(tele)-phospho-L-histidyl/L-threonyl-[pyruvate, phosphate dikinase] + diphosphate. Functionally, bifunctional serine/threonine kinase and phosphorylase involved in the regulation of the pyruvate, phosphate dikinase (PPDK) by catalyzing its phosphorylation/dephosphorylation. This is Putative pyruvate, phosphate dikinase regulatory protein from Rickettsia peacockii (strain Rustic).